Consider the following 379-residue polypeptide: DNA (cytosine-5)-methyltransferase (379 aa).

The region spanning 4 to 366 (LRVLEFYSGI…KVLVSPNEEE (363 aa)) is the SAM-dependent MTase C5-type domain. Residue Cys-78 is part of the active site. Positions 178-192 (KKEQDKHNEKVDENK) are enriched in basic and acidic residues. Positions 178-205 (KKEQDKHNEKVDENKLNNNSNNNNEQNK) are disordered. Residues 193-203 (LNNNSNNNNEQ) are compositionally biased toward low complexity.

This sequence belongs to the class I-like SAM-binding methyltransferase superfamily. C5-methyltransferase family.

It localises to the nucleus. It carries out the reaction a 2'-deoxycytidine in DNA + S-adenosyl-L-methionine = a 5-methyl-2'-deoxycytidine in DNA + S-adenosyl-L-homocysteine + H(+). Involved in epigenetic gene silencing. Methylates specific cytosine residues in the retrotransposons DIRS-1 and Skipper. In Dictyostelium discoideum (Social amoeba), this protein is DNA (cytosine-5)-methyltransferase (dnmA).